The sequence spans 371 residues: Alanine racemase (371 aa).

K40 serves as the catalytic Proton acceptor; specific for D-alanine. An N6-(pyridoxal phosphate)lysine modification is found at K40. Residue R138 coordinates substrate. The active-site Proton acceptor; specific for L-alanine is the Y267. M314 is a binding site for substrate.

It belongs to the alanine racemase family. It depends on pyridoxal 5'-phosphate as a cofactor.

It carries out the reaction L-alanine = D-alanine. Its pathway is amino-acid biosynthesis; D-alanine biosynthesis; D-alanine from L-alanine: step 1/1. In terms of biological role, catalyzes the interconversion of L-alanine and D-alanine. May also act on other amino acids. This Ligilactobacillus salivarius (strain UCC118) (Lactobacillus salivarius) protein is Alanine racemase (alr).